A 1863-amino-acid chain; its full sequence is E3 ubiquitin-protein ligase ubr3 (1863 aa).

The segment at 80–151 adopts a UBR-type zinc-finger fold; that stretch reads TLCGLVWTAN…ESGFCNRHRL (72 aa). Disordered regions lie at residues 302–330, 970–995, and 1128–1152; these read LDDS…SSTK, PEVE…SATF, and IPPK…RARE. Basic and acidic residues-rich tracts occupy residues 971 to 984 and 1134 to 1152; these read EVER…ERET and SPGD…RARE. An RING-type; degenerate zinc finger spans residues 1270–1328; that stretch reads DSSCLQSVSIGWDGGVYVQTCGHTLHIDCHKSYMESLRNDQVLQGISVDKGEFTCPLCR.

This sequence belongs to the E3 ubiquitin-protein ligase UBR1-like family.

The catalysed reaction is S-ubiquitinyl-[E2 ubiquitin-conjugating enzyme]-L-cysteine + [acceptor protein]-L-lysine = [E2 ubiquitin-conjugating enzyme]-L-cysteine + N(6)-ubiquitinyl-[acceptor protein]-L-lysine.. Its pathway is protein modification; protein ubiquitination. Functionally, E3 ubiquitin-protein ligase which is a component of the N-end rule pathway. Recognizes and binds to proteins bearing specific N-terminal residues, leading to their ubiquitination and subsequent degradation. Positively regulates hedgehog/shh-signaling pathways that function in eye development, neuronal specification and somite development. Activation of shh up-regulates transcription of ubr3, which in turn promotes hedgehog/shh signaling possibly by controlling negative regulators such as Kif7. In Danio rerio (Zebrafish), this protein is E3 ubiquitin-protein ligase ubr3.